The following is a 329-amino-acid chain: Beta-1,3-galactosyltransferase 6 (329 aa).

Over 1–11 the chain is Cytoplasmic; that stretch reads MKLLRRAWRRR. A helical; Signal-anchor for type II membrane protein membrane pass occupies residues 12–34; the sequence is AALGLGTLALCGAALLYLARCAA. Residues 35–329 are Lumenal-facing; that stretch reads EPGDPRAMSG…QCCQRREGIP (295 aa). N-linked (GlcNAc...) asparagine glycosylation occurs at Asn131.

The protein belongs to the glycosyltransferase 31 family. Requires Mn(2+) as cofactor. As to expression, ubiquitous.

The protein resides in the golgi apparatus. Its subcellular location is the golgi stack membrane. The catalysed reaction is 3-O-(beta-D-galactosyl-(1-&gt;4)-beta-D-xylosyl)-L-seryl-[protein] + UDP-alpha-D-galactose = 3-O-(beta-D-galactosyl-(1-&gt;3)-beta-D-galactosyl-(1-&gt;4)-beta-D-xylosyl)-L-seryl-[protein] + UDP + H(+). Its pathway is glycan metabolism; chondroitin sulfate biosynthesis. It functions in the pathway glycan metabolism; heparan sulfate biosynthesis. In terms of biological role, beta-1,3-galactosyltransferase that transfers galactose from UDP-galactose to substrates with a terminal beta-linked galactose residue. Has a preference for galactose-beta-1,4-xylose that is found in the linker region of glycosaminoglycans, such as heparan sulfate and chondroitin sulfate. Has no activity towards substrates with terminal glucosamine or galactosamine residues. This Homo sapiens (Human) protein is Beta-1,3-galactosyltransferase 6 (B3GALT6).